The sequence spans 246 residues: 3-deoxy-manno-octulosonate cytidylyltransferase (246 aa).

This sequence belongs to the KdsB family.

The protein localises to the cytoplasm. The catalysed reaction is 3-deoxy-alpha-D-manno-oct-2-ulosonate + CTP = CMP-3-deoxy-beta-D-manno-octulosonate + diphosphate. The protein operates within nucleotide-sugar biosynthesis; CMP-3-deoxy-D-manno-octulosonate biosynthesis; CMP-3-deoxy-D-manno-octulosonate from 3-deoxy-D-manno-octulosonate and CTP: step 1/1. It functions in the pathway bacterial outer membrane biogenesis; lipopolysaccharide biosynthesis. Activates KDO (a required 8-carbon sugar) for incorporation into bacterial lipopolysaccharide in Gram-negative bacteria. The protein is 3-deoxy-manno-octulosonate cytidylyltransferase of Rickettsia prowazekii (strain Madrid E).